A 962-amino-acid polypeptide reads, in one-letter code: Ubiquitin carboxyl-terminal hydrolase 4 (962 aa).

Residues 11–122 enclose the DUSP domain; sequence PDVETQKTEL…GQQPIVRKVV (112 aa). Residues 27–216 are necessary for interaction with SART3; that stretch reads TLQRGAQWYL…LYQGQVLVIE (190 aa). A Nuclear export signal motif is present at residues 133–141; that stretch reads VEVYLLELK. Positions 142–226 constitute a Ubiquitin-like 1 domain; the sequence is LCENSDPTNV…PQNEDGTWPR (85 aa). A disordered region spans residues 220–249; sequence EDGTWPRQSLQSKSSTAPSRNFTTSSKPSA. Residues 225–249 are compositionally biased toward polar residues; the sequence is PRQSLQSKSSTAPSRNFTTSSKPSA. The segment at 229-295 is required for USP4 activation by providing conformational flexibility between the DUSP and catalytic domains; it reads LQSKSSTAPS…SYNCQEPPSP (67 aa). In terms of domain architecture, USP spans 302–922; the sequence is CGLGNLGNTC…AAYVLFYQRR (621 aa). C311 functions as the Nucleophile in the catalytic mechanism. The tract at residues 384–386 is regulates ubiquitin dissociation; that stretch reads PQF. Residues 405-407 are necessary for interaction with RBL2; it reads LHE. A Phosphoserine modification is found at S445. Residues 459 to 463 are necessary for interaction with RB1 and RBL2; that stretch reads LVCPE. Zn(2+)-binding residues include C461 and C464. The Ubiquitin-like 2 domain maps to 483–571; it reads LKKDRIMEVF…IFVYEVCNTS (89 aa). The interacts with DUSP and ubiquitin-like 1 domains and is required for USP4 activation stretch occupies residues 485–774; that stretch reads KDRIMEVFLV…SQPQKKKKAA (290 aa). The tract at residues 638 to 699 is disordered; it reads EFLSSPLEPG…SESAQKVKGQ (62 aa). Residue S655 is modified to Phosphoserine. A compositionally biased stretch (acidic residues) spans 657–666; the sequence is EGDEEEEMDH. S675 and S680 each carry phosphoserine. Positions 766-771 match the Nuclear localization signal motif; it reads QPQKKK. Positions 798 and 801 each coordinate Zn(2+). Residue H880 is the Proton acceptor of the active site. Positions 928-937 are enriched in low complexity; that stretch reads STSSLGSFPG. The segment at 928-962 is disordered; the sequence is STSSLGSFPGSDGGVKLSSSHQGMGDEEAYNMDTN. The segment covering 952–962 has biased composition (acidic residues); the sequence is GDEEAYNMDTN.

The protein belongs to the peptidase C19 family. USP4 subfamily. In terms of assembly, interacts with RB1 (both dephosphorylated and hypophosphorylated forms). Interacts with RBL1 and RBL2. Interacts with ADORA2A (via cytoplasmic C-terminus); the interaction is direct. Interacts with SART3; recruits USP4 to its substrate PRPF3. In terms of processing, phosphorylated at Ser-445 by PKB/AKT1 in response to EGF stimulus, promoting its ability deubiquitinate RHEB. Monoubiquitinated by TRIM21. Ubiquitination does not lead to its proteasomal degradation. Autodeubiquitinated. In terms of tissue distribution, expressed in brain, kidney, liver and spleen (at protein level).

The protein localises to the cytoplasm. The protein resides in the nucleus. It catalyses the reaction Thiol-dependent hydrolysis of ester, thioester, amide, peptide and isopeptide bonds formed by the C-terminal Gly of ubiquitin (a 76-residue protein attached to proteins as an intracellular targeting signal).. Its activity is regulated as follows. The completion of the deubiquitinase reaction is mediated by the DUSP and ubiquitin-like 1 domains which promotes the release of ubiquitin from the catalytic site enabling subsequent reactions to occur. Functionally, deubiquitinating enzyme that removes conjugated ubiquitin from target proteins. Deubiquitinates PDPK1. Deubiquitinates TRIM21. Deubiquitinates receptor ADORA2A which increases the amount of functional receptor at the cell surface. Deubiquitinates HAS2. Deubiquitinates RHEB in response to EGF signaling, promoting mTORC1 signaling. May regulate mRNA splicing through deubiquitination of the U4 spliceosomal protein PRPF3. This may prevent its recognition by the U5 component PRPF8 thereby destabilizing interactions within the U4/U6.U5 snRNP. May also play a role in the regulation of quality control in the ER. The sequence is that of Ubiquitin carboxyl-terminal hydrolase 4 (Usp4) from Mus musculus (Mouse).